The following is a 138-amino-acid chain: Transcription antitermination protein NusB (138 aa).

It belongs to the NusB family.

In terms of biological role, involved in transcription antitermination. Required for transcription of ribosomal RNA (rRNA) genes. Binds specifically to the boxA antiterminator sequence of the ribosomal RNA (rrn) operons. In Photorhabdus laumondii subsp. laumondii (strain DSM 15139 / CIP 105565 / TT01) (Photorhabdus luminescens subsp. laumondii), this protein is Transcription antitermination protein NusB.